A 735-amino-acid polypeptide reads, in one-letter code: Ion-translocating oxidoreductase complex subunit C (735 aa).

4Fe-4S ferredoxin-type domains lie at 368-397 (MGAP…QQLY) and 407-436 (KATA…VQYF). 8 residues coordinate [4Fe-4S] cluster: cysteine 377, cysteine 380, cysteine 383, cysteine 387, cysteine 416, cysteine 419, cysteine 422, and cysteine 426. Residues 562-713 (AIARAKARKQ…AEPADPRKAA (152 aa)) form a disordered region.

This sequence belongs to the 4Fe4S bacterial-type ferredoxin family. RnfC subfamily. As to quaternary structure, the complex is composed of six subunits: RsxA, RsxB, RsxC, RsxD, RsxE and RsxG. The cofactor is [4Fe-4S] cluster.

The protein resides in the cell inner membrane. Functionally, part of a membrane-bound complex that couples electron transfer with translocation of ions across the membrane. Required to maintain the reduced state of SoxR. The polypeptide is Ion-translocating oxidoreductase complex subunit C (Salmonella newport (strain SL254)).